The sequence spans 239 residues: Ribonuclease PH (239 aa).

Phosphate contacts are provided by residues Arg87 and 125-127 (GTR).

This sequence belongs to the RNase PH family. Homohexameric ring arranged as a trimer of dimers.

The catalysed reaction is tRNA(n+1) + phosphate = tRNA(n) + a ribonucleoside 5'-diphosphate. Functionally, phosphorolytic 3'-5' exoribonuclease that plays an important role in tRNA 3'-end maturation. Removes nucleotide residues following the 3'-CCA terminus of tRNAs; can also add nucleotides to the ends of RNA molecules by using nucleoside diphosphates as substrates, but this may not be physiologically important. Probably plays a role in initiation of 16S rRNA degradation (leading to ribosome degradation) during starvation. The protein is Ribonuclease PH of Pseudomonas aeruginosa (strain LESB58).